A 486-amino-acid polypeptide reads, in one-letter code: MTIKHTQDLAQIRAMVPEMRRVKAIHFIGIGGAGMSGIAEVLLNEGYQISGSDLAANAVTDRLADKGATIFIGHEAHNVAHASVVVVSTAINEQNPEIQAAREKRIPIVRRAEMLAELMRFRHGIAVAGTHGKTTTTALVTQIYSEAGLDPTFVNGGLVKSAGTNARLGSSRILIAEADESDASFLHLQPMVTIVTNIEADHMDTYGGDFENLKQTFIDFLHNLPFYGQAILCIDDPVIRELIPRVSRQVITYGFSEDADVRIENYRQNGQQGQFTVVRKGKANLDITLNIPGRHNALNAAAAIAVATEDDIRDEAILRAMANTQGTGRRFDHLGEFETGNGVAMLVDDYGHHPTEVDVTIKAARNGWAEKRLVMIFQPHRYTRTRDLYDDFANVLEQVDVLLMLDVYAAGEKPIAGADGRSLCRTIRSRGKIDPIFVPDSQTLPSVLANILQDGDLVLTQGAGDVGKVARHLAALELNIGRMQQI.

An ATP-binding site is contributed by 129 to 135; the sequence is GTHGKTT.

The protein belongs to the MurCDEF family.

It localises to the cytoplasm. It carries out the reaction UDP-N-acetyl-alpha-D-muramate + L-alanine + ATP = UDP-N-acetyl-alpha-D-muramoyl-L-alanine + ADP + phosphate + H(+). The protein operates within cell wall biogenesis; peptidoglycan biosynthesis. Functionally, cell wall formation. The polypeptide is UDP-N-acetylmuramate--L-alanine ligase (Vibrio cholerae serotype O1 (strain ATCC 39541 / Classical Ogawa 395 / O395)).